The primary structure comprises 116 residues: ATP synthase lipid-binding protein, mitochondrial (116 aa).

The N-terminal 24 residues, 1-24 (MYCQRLALPLTRSLLASRAPLALR), are a transit peptide targeting the mitochondrion. The helical transmembrane segment at 57-77 (VGVAGSGAGIGNVFGALVIGY) threads the bilayer. Residue K84 is modified to N6,N6,N6-trimethyllysine. Residues 92-112 (ILGFALSEAMGLFCLTMGFMI) traverse the membrane as a helical segment.

This sequence belongs to the ATPase C chain family. As to quaternary structure, F-type ATPases have 2 components, CF(1) - the catalytic core - and CF(0) - the membrane proton channel. CF(1) has five subunits: alpha(3), beta(3), gamma(1), delta(1), epsilon(1). CF(0) has three main subunits: a, b and c. In terms of processing, trimethylated by ATPSCKMT at Lys-84. Methylation may be required for proper incorporation of the C subunit into the ATP synthase complex and mitochondrial respiration.

It is found in the mitochondrion membrane. Functionally, mitochondrial membrane ATP synthase (F(1)F(0) ATP synthase or Complex V) produces ATP from ADP in the presence of a proton gradient across the membrane which is generated by electron transport complexes of the respiratory chain. F-type ATPases consist of two structural domains, F(1) - containing the extramembraneous catalytic core and F(0) - containing the membrane proton channel, linked together by a central stalk and a peripheral stalk. During catalysis, ATP synthesis in the catalytic domain of F(1) is coupled via a rotary mechanism of the central stalk subunits to proton translocation. Part of the complex F(0) domain. A homomeric c-ring of probably 10 subunits is part of the complex rotary element. In Caenorhabditis briggsae, this protein is ATP synthase lipid-binding protein, mitochondrial.